The sequence spans 239 residues: MATAVLFDLDNTLYPYPPCNQAGKAAALERAQELGYDFDHESFAEFYQAGRREVKRDTGGTAASHERYLYFKRALELHTGSPRPGDALALGDAYWSAYLEEMSLVPDAKETLEELQEQGVDIAITTNLTTTIQLAKLERLGLTDYVDLVLTSEETGQEKPASVMFTLPLARLDSRASEAVMVGDDLEADIAGANAVGLETVLFDPSEESDATESADRAATERQADHSIDTLGELTDLVS.

Asp8 serves as the catalytic Nucleophile. Mg(2+) contacts are provided by Asp8, Asp10, and Asp184. Catalysis depends on Asp10, which acts as the Proton donor. The disordered stretch occupies residues 205–239 (PSEESDATESADRAATERQADHSIDTLGELTDLVS). The span at 214 to 228 (SADRAATERQADHSI) shows a compositional bias: basic and acidic residues.

Belongs to the HAD-like hydrolase superfamily. Mg(2+) serves as cofactor. It depends on Mn(2+) as a cofactor. Co(2+) is required as a cofactor. Requires Ni(2+) as cofactor.

The enzyme catalyses D-ribulose 1,5-bisphosphate + H2O = D-ribulose 1-phosphate + phosphate. With respect to regulation, requires both monovalent and divalent ions for optimal activity. Optimal KCl concentration is higher than 2.5 M. Functionally, phosphatase involved in the non-carboxylating pentose bisphosphate pathway, a nucleoside degradation pathway present in some halophilic archaea. Catalyzes the dephosphorylation of ribulose 1,5-bisphosphate (RuBP) to ribulose 1-phosphate (Ru1P). Shows a strict substrate specificity toward RuBP. This is Ribulose-1,5-bisphosphate 5-phosphatase from Halopiger xanaduensis (strain DSM 18323 / JCM 14033 / SH-6).